Consider the following 261-residue polypeptide: MAAAVRSVKGLVAVVTGGASGPWLATAKRLVGQGATAVLLDVPDSEGESQAKKLGESCIFAPANVTSEKEIQAALTLAKEKFGRIDVAVNCAGIAVAIKTYHQKKNKIHTLEDFQRVINVNLIGTFNVIRLVAGEMGQNEPDQGGQRGVIINTASVAAFEGQVGQAAYSASKGGIDGMTLPIARDLAPTGIRVVTIAPGLFATPLLTTLPEKVRNFLASQVPFPSRLGDPAEYAHLVQTIIENPFLNGEVIRLDGAIRMQP.

A2 is modified (N-acetylalanine). The NAD(+) site is built by S20 and D41. At K53 the chain carries N6-acetyllysine; alternate. K53 is modified (N6-succinyllysine; alternate). V65 is an NAD(+) binding site. K69 carries the post-translational modification N6-acetyllysine. Residue C91 coordinates NAD(+). An N6-acetyllysine mark is found at K99 and K105. K107 bears the N6-acetyllysine; alternate mark. K107 is modified (N6-succinyllysine; alternate). S155 serves as a coordination point for substrate. NAD(+)-binding residues include Y168, K172, F201, and T203. The active-site Proton acceptor is Y168. K212 is subject to N6-acetyllysine; alternate. K212 is subject to N6-succinyllysine; alternate.

This sequence belongs to the short-chain dehydrogenases/reductases (SDR) family. As to quaternary structure, homotetramer. Component of mitochondrial ribonuclease P, a complex composed of TRMT10C/MRPP1, HSD17B10/MRPP2 and PRORP/MRPP3. Interacts with TRMT10C/MRPP1; forming the MRPP1-MRPP2 subcomplex of the mitochondrial ribonuclease P complex.

Its subcellular location is the mitochondrion. It localises to the mitochondrion matrix. It is found in the mitochondrion nucleoid. The catalysed reaction is a (3S)-3-hydroxyacyl-CoA + NAD(+) = a 3-oxoacyl-CoA + NADH + H(+). It catalyses the reaction (2S,3S)-3-hydroxy-2-methylbutanoyl-CoA + NAD(+) = 2-methyl-3-oxobutanoyl-CoA + NADH + H(+). It carries out the reaction testosterone + NAD(+) = androst-4-ene-3,17-dione + NADH + H(+). The enzyme catalyses 5alpha-androstane-3alpha,17beta-diol + NAD(+) = 17beta-hydroxy-5alpha-androstan-3-one + NADH + H(+). The catalysed reaction is 17beta-estradiol + NAD(+) = estrone + NADH + H(+). It catalyses the reaction cholate + NAD(+) = 3alpha,12alpha-dihydroxy-7-oxo-5beta-cholanate + NADH + H(+). It carries out the reaction (3S)-3-hydroxybutanoyl-CoA + NAD(+) = acetoacetyl-CoA + NADH + H(+). The enzyme catalyses (3S)-hydroxyoctanoyl-CoA + NAD(+) = 3-oxooctanoyl-CoA + NADH + H(+). The catalysed reaction is (3S)-hydroxyhexadecanoyl-CoA + NAD(+) = 3-oxohexadecanoyl-CoA + NADH + H(+). It catalyses the reaction 17beta-hydroxy-5alpha-androstan-3-one + NAD(+) = 5alpha-androstan-3,17-dione + NADH + H(+). It carries out the reaction 5alpha-pregnan-20beta-ol-3-one + NAD(+) = 5alpha-pregnane-3,20-dione + NADH + H(+). The enzyme catalyses 3alpha-hydroxy-5alpha-pregnan-20-one + NAD(+) = 5alpha-pregnane-3,20-dione + NADH + H(+). The catalysed reaction is cortisone + NAD(+) = 17alpha-hydroxypregn-4-en-3,11,20-trione-21-al + NADH + H(+). It catalyses the reaction 11-dehydrocorticosterone + NAD(+) = pregn-4-ene-3,11,20,21-tetraone + NADH + H(+). It carries out the reaction cortisol + NAD(+) = 11beta,17alpha-dihydroxypregn-4-ene-3,20,21-trione + NADH + H(+). The enzyme catalyses chenodeoxycholate + NAD(+) = 7-oxolithocholate + NADH + H(+). The catalysed reaction is ursodeoxycholate + NAD(+) = 7-oxolithocholate + NADH + H(+). It catalyses the reaction 3beta,7beta-dihydroxy-5beta-cholan-24-oate + NAD(+) = 3beta-hydroxy-7-oxo-5beta-cholan-24-oate + NADH + H(+). Its pathway is amino-acid degradation; L-isoleucine degradation. It functions in the pathway lipid metabolism; fatty acid beta-oxidation. It participates in steroid metabolism. The protein operates within lipid metabolism; bile acid biosynthesis. In terms of biological role, mitochondrial dehydrogenase involved in pathways of fatty acid, branched-chain amino acid and steroid metabolism. Acts as (S)-3-hydroxyacyl-CoA dehydrogenase in mitochondrial fatty acid beta-oxidation, a major degradation pathway of fatty acids. Catalyzes the third step in the beta-oxidation cycle, namely the reversible conversion of (S)-3-hydroxyacyl-CoA to 3-ketoacyl-CoA. Preferentially accepts straight medium- and short-chain acyl-CoA substrates with highest efficiency for (3S)-hydroxybutanoyl-CoA. Acts as 3-hydroxy-2-methylbutyryl-CoA dehydrogenase in branched-chain amino acid catabolic pathway. Catalyzes the oxidation of 3-hydroxy-2-methylbutanoyl-CoA into 2-methyl-3-oxobutanoyl-CoA, a step in isoleucine degradation pathway. Has hydroxysteroid dehydrogenase activity toward steroid hormones and bile acids. Catalyzes the oxidation of 3alpha-, 17beta-, 20beta- and 21-hydroxysteroids and 7alpha- and 7beta-hydroxy bile acids. Oxidizes allopregnanolone/brexanolone at the 3alpha-hydroxyl group, which is known to be critical for the activation of gamma-aminobutyric acid receptors (GABAARs) chloride channel. Has phospholipase C-like activity toward cardiolipin and its oxidized species. Likely oxidizes the 2'-hydroxyl in the head group of cardiolipin to form a ketone intermediate that undergoes nucleophilic attack by water and fragments into diacylglycerol, dihydroxyacetone and orthophosphate. Has higher affinity for cardiolipin with oxidized fatty acids and may degrade these species during the oxidative stress response to protect cells from apoptosis. By interacting with intracellular amyloid-beta, it may contribute to the neuronal dysfunction associated with Alzheimer disease (AD). Essential for structural and functional integrity of mitochondria. Functionally, in addition to mitochondrial dehydrogenase activity, moonlights as a component of mitochondrial ribonuclease P, a complex that cleaves tRNA molecules in their 5'-ends. Together with TRMT10C/MRPP1, forms a subcomplex of the mitochondrial ribonuclease P, named MRPP1-MRPP2 subcomplex, which displays functions that are independent of the ribonuclease P activity. The MRPP1-MRPP2 subcomplex catalyzes the formation of N(1)-methylguanine and N(1)-methyladenine at position 9 (m1G9 and m1A9, respectively) in tRNAs; HSD17B10/MRPP2 acting as a non-catalytic subunit. The MRPP1-MRPP2 subcomplex also acts as a tRNA maturation platform: following 5'-end cleavage by the mitochondrial ribonuclease P complex, the MRPP1-MRPP2 subcomplex enhances the efficiency of 3'-processing catalyzed by ELAC2, retains the tRNA product after ELAC2 processing and presents the nascent tRNA to the mitochondrial CCA tRNA nucleotidyltransferase TRNT1 enzyme. Associates with mitochondrial DNA complexes at the nucleoids to initiate RNA processing and ribosome assembly. The sequence is that of 3-hydroxyacyl-CoA dehydrogenase type-2 (Hsd17b10) from Mus musculus (Mouse).